The sequence spans 317 residues: Acetyl-coenzyme A carboxylase carboxyl transferase subunit alpha (317 aa).

The 254-residue stretch at 40 to 293 folds into the CoA carboxyltransferase C-terminal domain; it reads LEVRVREAIV…GDVIANALGE (254 aa).

It belongs to the AccA family. Acetyl-CoA carboxylase is a heterohexamer composed of biotin carboxyl carrier protein (AccB), biotin carboxylase (AccC) and two subunits each of ACCase subunit alpha (AccA) and ACCase subunit beta (AccD).

The protein localises to the cytoplasm. The enzyme catalyses N(6)-carboxybiotinyl-L-lysyl-[protein] + acetyl-CoA = N(6)-biotinyl-L-lysyl-[protein] + malonyl-CoA. The protein operates within lipid metabolism; malonyl-CoA biosynthesis; malonyl-CoA from acetyl-CoA: step 1/1. In terms of biological role, component of the acetyl coenzyme A carboxylase (ACC) complex. First, biotin carboxylase catalyzes the carboxylation of biotin on its carrier protein (BCCP) and then the CO(2) group is transferred by the carboxyltransferase to acetyl-CoA to form malonyl-CoA. In Rhizobium leguminosarum bv. trifolii (strain WSM2304), this protein is Acetyl-coenzyme A carboxylase carboxyl transferase subunit alpha.